A 216-amino-acid chain; its full sequence is uncharacterized protein (216 aa).

This is an uncharacterized protein from Acanthamoeba polyphaga mimivirus (APMV).